We begin with the raw amino-acid sequence, 160 residues long: Cytochrome c-type biogenesis protein CcmE (160 aa).

The Cytoplasmic portion of the chain corresponds to 1 to 8 (MSAPRKTR). A helical; Signal-anchor for type II membrane protein membrane pass occupies residues 9-29 (LYAILAVVCGAVLTIALMLYA). Over 30 to 160 (LSSNIDLFYT…PAAGPEGKRL (131 aa)) the chain is Periplasmic. The heme site is built by His-130 and Tyr-134.

Belongs to the CcmE/CycJ family.

It is found in the cell inner membrane. Heme chaperone required for the biogenesis of c-type cytochromes. Transiently binds heme delivered by CcmC and transfers the heme to apo-cytochromes in a process facilitated by CcmF and CcmH. In Pectobacterium atrosepticum (strain SCRI 1043 / ATCC BAA-672) (Erwinia carotovora subsp. atroseptica), this protein is Cytochrome c-type biogenesis protein CcmE.